A 435-amino-acid polypeptide reads, in one-letter code: Methylenetetrahydrofolate--tRNA-(uracil-5-)-methyltransferase TrmFO (435 aa).

Residue Gly-10–Gly-15 coordinates FAD.

The protein belongs to the MnmG family. TrmFO subfamily. FAD is required as a cofactor.

Its subcellular location is the cytoplasm. It catalyses the reaction uridine(54) in tRNA + (6R)-5,10-methylene-5,6,7,8-tetrahydrofolate + NADH + H(+) = 5-methyluridine(54) in tRNA + (6S)-5,6,7,8-tetrahydrofolate + NAD(+). It carries out the reaction uridine(54) in tRNA + (6R)-5,10-methylene-5,6,7,8-tetrahydrofolate + NADPH + H(+) = 5-methyluridine(54) in tRNA + (6S)-5,6,7,8-tetrahydrofolate + NADP(+). Catalyzes the folate-dependent formation of 5-methyl-uridine at position 54 (M-5-U54) in all tRNAs. This Geotalea uraniireducens (strain Rf4) (Geobacter uraniireducens) protein is Methylenetetrahydrofolate--tRNA-(uracil-5-)-methyltransferase TrmFO.